Reading from the N-terminus, the 156-residue chain is Methylated-DNA--protein-cysteine methyltransferase (156 aa).

The active-site Nucleophile; methyl group acceptor is the C120.

Belongs to the MGMT family.

It localises to the cytoplasm. The enzyme catalyses a 6-O-methyl-2'-deoxyguanosine in DNA + L-cysteinyl-[protein] = S-methyl-L-cysteinyl-[protein] + a 2'-deoxyguanosine in DNA. It catalyses the reaction a 4-O-methyl-thymidine in DNA + L-cysteinyl-[protein] = a thymidine in DNA + S-methyl-L-cysteinyl-[protein]. Involved in the cellular defense against the biological effects of O6-methylguanine (O6-MeG) and O4-methylthymine (O4-MeT) in DNA. Repairs the methylated nucleobase in DNA by stoichiometrically transferring the methyl group to a cysteine residue in the enzyme. This is a suicide reaction: the enzyme is irreversibly inactivated. This chain is Methylated-DNA--protein-cysteine methyltransferase, found in Metallosphaera sedula (strain ATCC 51363 / DSM 5348 / JCM 9185 / NBRC 15509 / TH2).